Here is a 694-residue protein sequence, read N- to C-terminus: Beta-mannosyltransferase 8 (694 aa).

The Cytoplasmic segment spans residues 1–11 (MKFPKLRKRTV). A helical membrane pass occupies residues 12–29 (YWAVLTVFALFTIHFVFQ). Topologically, residues 30–694 (YKEHNSHRVQ…YLYDHASVNS (665 aa)) are extracellular. 2 N-linked (GlcNAc...) asparagine glycosylation sites follow: N101 and N542.

This sequence belongs to the BMT family.

It is found in the membrane. Its function is as follows. Beta-mannosyltransferase involved in cell wall biosynthesis through beta-1,2-mannosylation of cell wall phosphopeptidomannan. Plays a role in the ability to produce hyphae in the presence of three bacterial species. This chain is Beta-mannosyltransferase 8 (BMT8), found in Candida albicans (strain SC5314 / ATCC MYA-2876) (Yeast).